We begin with the raw amino-acid sequence, 368 residues long: Peptide chain release factor 2 (368 aa).

Gln250 carries the post-translational modification N5-methylglutamine.

It belongs to the prokaryotic/mitochondrial release factor family. In terms of processing, methylated by PrmC. Methylation increases the termination efficiency of RF2.

Its subcellular location is the cytoplasm. Functionally, peptide chain release factor 2 directs the termination of translation in response to the peptide chain termination codons UGA and UAA. The chain is Peptide chain release factor 2 from Rickettsia conorii (strain ATCC VR-613 / Malish 7).